The primary structure comprises 218 residues: NAD(P)H-quinone oxidoreductase subunit I (218 aa).

2 4Fe-4S ferredoxin-type domains span residues 55–84 (GRIH…VDWV) and 95–124 (RNYS…MTEE). Residues cysteine 64, cysteine 67, cysteine 70, cysteine 74, cysteine 104, cysteine 107, cysteine 110, and cysteine 114 each contribute to the [4Fe-4S] cluster site. A disordered region spans residues 169 to 218 (MDPHELPANQQRAGKLPSQIIKELQAEKSEEKGNNNSSDIVPNKLNSTNK). A compositionally biased stretch (basic and acidic residues) spans 192 to 201 (LQAEKSEEKG). Polar residues predominate over residues 202–218 (NNNSSDIVPNKLNSTNK).

It belongs to the complex I 23 kDa subunit family. NDH-1 is composed of at least 11 different subunits. Requires [4Fe-4S] cluster as cofactor.

It is found in the cellular thylakoid membrane. The enzyme catalyses a plastoquinone + NADH + (n+1) H(+)(in) = a plastoquinol + NAD(+) + n H(+)(out). The catalysed reaction is a plastoquinone + NADPH + (n+1) H(+)(in) = a plastoquinol + NADP(+) + n H(+)(out). Functionally, NDH-1 shuttles electrons from an unknown electron donor, via FMN and iron-sulfur (Fe-S) centers, to quinones in the respiratory and/or the photosynthetic chain. The immediate electron acceptor for the enzyme in this species is believed to be plastoquinone. Couples the redox reaction to proton translocation, and thus conserves the redox energy in a proton gradient. This is NAD(P)H-quinone oxidoreductase subunit I from Prochlorococcus marinus (strain NATL1A).